The sequence spans 341 residues: tRNA dimethylallyltransferase (341 aa).

Gly-15–Thr-22 provides a ligand contact to ATP. Thr-17–Thr-22 serves as a coordination point for substrate. Interaction with substrate tRNA regions lie at residues Asp-44 to Leu-47, Gln-168 to Arg-172, Arg-253 to Arg-258, and Lys-302 to Arg-309.

This sequence belongs to the IPP transferase family. As to quaternary structure, monomer. The cofactor is Mg(2+).

The enzyme catalyses adenosine(37) in tRNA + dimethylallyl diphosphate = N(6)-dimethylallyladenosine(37) in tRNA + diphosphate. Catalyzes the transfer of a dimethylallyl group onto the adenine at position 37 in tRNAs that read codons beginning with uridine, leading to the formation of N6-(dimethylallyl)adenosine (i(6)A). The sequence is that of tRNA dimethylallyltransferase from Verminephrobacter eiseniae (strain EF01-2).